The following is a 258-amino-acid chain: Probable parvulin-type peptidyl-prolyl cis-trans isomerase (258 aa).

The first 19 residues, 1 to 19 (MKRIAMLAAACVIAVPAFA), serve as a signal peptide directing secretion. Residues 127 to 219 (KMEYKVRHIL…FGWHVIQVDD (93 aa)) enclose the PpiC domain. Basic and acidic residues predominate over residues 158–175 (DDLAKKNSKDPGSAERGG). The interval 158–178 (DDLAKKNSKDPGSAERGGDLG) is disordered.

It belongs to the PpiC/parvulin rotamase family.

The catalysed reaction is [protein]-peptidylproline (omega=180) = [protein]-peptidylproline (omega=0). In Bordetella bronchiseptica (strain ATCC BAA-588 / NCTC 13252 / RB50) (Alcaligenes bronchisepticus), this protein is Probable parvulin-type peptidyl-prolyl cis-trans isomerase.